The chain runs to 306 residues: tRNA dimethylallyltransferase (306 aa).

9 to 16 (GPTAIGKT) contributes to the ATP binding site. A substrate-binding site is contributed by 11–16 (TAIGKT). Positions 34-37 (DSMQ) are interaction with substrate tRNA.

Belongs to the IPP transferase family. As to quaternary structure, monomer. Mg(2+) is required as a cofactor.

The catalysed reaction is adenosine(37) in tRNA + dimethylallyl diphosphate = N(6)-dimethylallyladenosine(37) in tRNA + diphosphate. Functionally, catalyzes the transfer of a dimethylallyl group onto the adenine at position 37 in tRNAs that read codons beginning with uridine, leading to the formation of N6-(dimethylallyl)adenosine (i(6)A). The chain is tRNA dimethylallyltransferase from Lactobacillus acidophilus (strain ATCC 700396 / NCK56 / N2 / NCFM).